The primary structure comprises 68 residues: Small ribosomal subunit protein bS21 (68 aa).

The tract at residues 35 to 68 is disordered; the sequence is HYEKPSEKRARERAAAVRRARKMERKRMERDGIK. Basic and acidic residues predominate over residues 37–49; that stretch reads EKPSEKRARERAA. Basic residues predominate over residues 50-59; that stretch reads AVRRARKMER.

It belongs to the bacterial ribosomal protein bS21 family.

In Sphingopyxis alaskensis (strain DSM 13593 / LMG 18877 / RB2256) (Sphingomonas alaskensis), this protein is Small ribosomal subunit protein bS21.